The primary structure comprises 62 residues: MTSIFQLTLFALILFSFVLVVGVPVVFALPNGWTENKRIVLSGLGLWILLVFVVGILNSFVV.

Helical transmembrane passes span 8-28 (TLFA…VVFA) and 41-61 (LSGL…NSFV).

The protein belongs to the PsbZ family. As to quaternary structure, PSII is composed of 1 copy each of membrane proteins PsbA, PsbB, PsbC, PsbD, PsbE, PsbF, PsbH, PsbI, PsbJ, PsbK, PsbL, PsbM, PsbT, PsbY, PsbZ, Psb30/Ycf12, at least 3 peripheral proteins of the oxygen-evolving complex and a large number of cofactors. It forms dimeric complexes.

The protein resides in the plastid. The protein localises to the chloroplast thylakoid membrane. May control the interaction of photosystem II (PSII) cores with the light-harvesting antenna, regulates electron flow through the 2 photosystem reaction centers. PSII is a light-driven water plastoquinone oxidoreductase, using light energy to abstract electrons from H(2)O, generating a proton gradient subsequently used for ATP formation. In Stigeoclonium helveticum (Green alga), this protein is Photosystem II reaction center protein Z.